We begin with the raw amino-acid sequence, 338 residues long: Aspartate-semialdehyde dehydrogenase (338 aa).

Residues 9 to 12 (TGQV) and 37 to 38 (RS) contribute to the NADP(+) site. Arg-93 contacts phosphate. Cys-123 (acyl-thioester intermediate) is an active-site residue. Gln-150 provides a ligand contact to substrate. An NADP(+)-binding site is contributed by 153–154 (SG). Residue Lys-220 participates in phosphate binding. Arg-242 is a substrate binding site. Residue His-249 is the Proton acceptor of the active site. Residue Asn-316 participates in NADP(+) binding.

The protein belongs to the aspartate-semialdehyde dehydrogenase family. Homodimer.

It catalyses the reaction L-aspartate 4-semialdehyde + phosphate + NADP(+) = 4-phospho-L-aspartate + NADPH + H(+). It participates in amino-acid biosynthesis; L-lysine biosynthesis via DAP pathway; (S)-tetrahydrodipicolinate from L-aspartate: step 2/4. The protein operates within amino-acid biosynthesis; L-methionine biosynthesis via de novo pathway; L-homoserine from L-aspartate: step 2/3. Its pathway is amino-acid biosynthesis; L-threonine biosynthesis; L-threonine from L-aspartate: step 2/5. Catalyzes the NADPH-dependent formation of L-aspartate-semialdehyde (L-ASA) by the reductive dephosphorylation of L-aspartyl-4-phosphate. The chain is Aspartate-semialdehyde dehydrogenase from Streptomyces akiyoshiensis.